We begin with the raw amino-acid sequence, 173 residues long: 2-C-methyl-D-erythritol 2,4-cyclodiphosphate synthase (173 aa).

A divalent metal cation-binding residues include Asp-17 and His-19. 4-CDP-2-C-methyl-D-erythritol 2-phosphate contacts are provided by residues 17 to 19 (DVH) and 49 to 50 (HS). Position 57 (His-57) interacts with a divalent metal cation. 4-CDP-2-C-methyl-D-erythritol 2-phosphate contacts are provided by residues 76–80 (FPNTD), 147–150 (TTTE), and Arg-157.

The protein belongs to the IspF family. Homotrimer. It depends on a divalent metal cation as a cofactor.

It carries out the reaction 4-CDP-2-C-methyl-D-erythritol 2-phosphate = 2-C-methyl-D-erythritol 2,4-cyclic diphosphate + CMP. It functions in the pathway isoprenoid biosynthesis; isopentenyl diphosphate biosynthesis via DXP pathway; isopentenyl diphosphate from 1-deoxy-D-xylulose 5-phosphate: step 4/6. Its function is as follows. Involved in the biosynthesis of isopentenyl diphosphate (IPP) and dimethylallyl diphosphate (DMAPP), two major building blocks of isoprenoid compounds. Catalyzes the conversion of 4-diphosphocytidyl-2-C-methyl-D-erythritol 2-phosphate (CDP-ME2P) to 2-C-methyl-D-erythritol 2,4-cyclodiphosphate (ME-CPP) with a corresponding release of cytidine 5-monophosphate (CMP). In Ehrlichia ruminantium (strain Gardel), this protein is 2-C-methyl-D-erythritol 2,4-cyclodiphosphate synthase.